We begin with the raw amino-acid sequence, 355 residues long: Replication-associated protein (355 aa).

One can recognise a CRESS-DNA virus Rep endonuclease domain in the interval 11–114; sequence LHRTANTFLT…PLALFERGTF (104 aa). The RCR-1 motif lies at 18–21; it reads FLTY. A divalent metal cation contacts are provided by glutamate 52, histidine 60, and histidine 62. The RCR-2 signature appears at 60–62; that stretch reads HLH. The active-site For DNA cleavage activity is tyrosine 100. Residues 100-103 carry the RCR-3 motif; the sequence is YILK. Glutamate 104 contributes to the a divalent metal cation binding site. An oligomerization region spans residues 175–187; that stretch reads SANKLFPDIQEEF. An ATP-binding site is contributed by 229–236; sequence GPTRTGKS. A transactivation region spans residues 252–270; sequence VDWSSYNEDAIYNIVDDIP. A Nuclear localization signal motif is present at residues 292-303; it reads KYGKKKKVQMKS.

Belongs to the geminiviridae Rep protein family. In terms of assembly, homooligomer. Rep binds to repeated DNA motifs (iterons). Forms the O-complex, which is a Rep-DNA complex involved in the initiation of RCR. Part of the C- and V-complexes which are RepA-Rep-DNA complexes involved in the c-sense and v-sense transcription. It depends on Mg(2+) as a cofactor. Mn(2+) is required as a cofactor.

Its subcellular location is the host nucleus. Essential for the replication of viral ssDNA. The closed circular ssDNA genome is first converted to a superhelical dsDNA. Rep binds a specific region at the genome origin of replication. It introduces an endonucleolytic nick within the conserved sequence 5'-TAATATTAC-3' in the intergenic region of the genome present in all geminiviruses, thereby initiating the rolling circle replication (RCR). Following cleavage, binds covalently to the 5'-phosphate of DNA as a tyrosyl ester. The cleavage gives rise to a free 3'-OH that serves as a primer for the cellular DNA polymerase. The polymerase synthesizes the (+) strand DNA by rolling circle mechanism. After one round of replication, a Rep-catalyzed nucleotidyl transfer reaction releases a circular single-stranded virus genome, thereby terminating the replication. Displays origin-specific DNA cleavage, nucleotidyl transferase, ATPase and helicase activities. Acts as an inhibitor of C-sense gene transcription. The polypeptide is Replication-associated protein (Maize streak virus genotype D (isolate Raw) (MSV)).